A 484-amino-acid polypeptide reads, in one-letter code: Putative cysteine ligase BshC (484 aa).

Positions 372–435 form a coiled coil; the sequence is RAFRDRVEGL…AARDEVLARH (64 aa).

The protein belongs to the BshC family.

This Thermus thermophilus (strain ATCC 27634 / DSM 579 / HB8) protein is Putative cysteine ligase BshC.